The primary structure comprises 383 residues: 8-amino-7-oxononanoate synthase (383 aa).

Arg21 contacts substrate. Position 108 to 109 (108 to 109 (GY)) interacts with pyridoxal 5'-phosphate. His133 lines the substrate pocket. Ser179, His207, and Thr233 together coordinate pyridoxal 5'-phosphate. The residue at position 236 (Lys236) is an N6-(pyridoxal phosphate)lysine. Substrate is bound at residue Thr350.

The protein belongs to the class-II pyridoxal-phosphate-dependent aminotransferase family. BioF subfamily. As to quaternary structure, homodimer. Requires pyridoxal 5'-phosphate as cofactor.

It catalyses the reaction 6-carboxyhexanoyl-[ACP] + L-alanine + H(+) = (8S)-8-amino-7-oxononanoate + holo-[ACP] + CO2. Its pathway is cofactor biosynthesis; biotin biosynthesis. In terms of biological role, catalyzes the decarboxylative condensation of pimeloyl-[acyl-carrier protein] and L-alanine to produce 8-amino-7-oxononanoate (AON), [acyl-carrier protein], and carbon dioxide. This Serratia proteamaculans (strain 568) protein is 8-amino-7-oxononanoate synthase.